The chain runs to 1101 residues: Error-prone DNA polymerase (1101 aa).

The tract at residues 1055–1101 is disordered; that stretch reads ADLGHPMDSAVGQTTPQTDSAPRPRPQPRAMHPREQAKRLFPSRDFH. Residues 1065–1074 show a composition bias toward polar residues; that stretch reads VGQTTPQTDS. Basic and acidic residues predominate over residues 1086–1101; that stretch reads HPREQAKRLFPSRDFH.

It belongs to the DNA polymerase type-C family. DnaE2 subfamily.

The protein localises to the cytoplasm. It catalyses the reaction DNA(n) + a 2'-deoxyribonucleoside 5'-triphosphate = DNA(n+1) + diphosphate. DNA polymerase involved in damage-induced mutagenesis and translesion synthesis (TLS). It is not the major replicative DNA polymerase. This Ruegeria pomeroyi (strain ATCC 700808 / DSM 15171 / DSS-3) (Silicibacter pomeroyi) protein is Error-prone DNA polymerase.